The chain runs to 748 residues: Subtilisin-like protease (748 aa).

The N-terminal stretch at 1 to 24 (MMKMELRLLVSLIFILCSISMLAA) is a signal peptide. Residues 37-115 (TYIVHVKKSE…ARPERTLELH (79 aa)) form the Inhibitor I9 domain. One can recognise a Peptidase S8 domain in the interval 122-600 (FLGLKQGQGL…AGHVNPVKAN (479 aa)). Residues D147 and H206 each act as charge relay system in the active site. Residues 365-454 (PLVYPGSFGY…VEVSYAAGLT (90 aa)) enclose the PA domain. N-linked (GlcNAc...) asparagine glycosylation is found at N376, N380, and N405. S533 (charge relay system) is an active-site residue. N-linked (GlcNAc...) asparagine glycans are attached at residues N675 and N722.

Belongs to the peptidase S8 family.

It is found in the secreted. The protein localises to the extracellular space. The protein resides in the apoplast. Functionally, required for arbuscular mycorrhiza (AM) development during AM symbiosis with AM fungi (e.g. Glomeromycota intraradices). The chain is Subtilisin-like protease from Medicago truncatula (Barrel medic).